Consider the following 393-residue polypeptide: DNA-directed RNA polymerase subunit Rpo1C (393 aa).

The protein belongs to the RNA polymerase beta' chain family. As to quaternary structure, part of the RNA polymerase complex.

Its subcellular location is the cytoplasm. It catalyses the reaction RNA(n) + a ribonucleoside 5'-triphosphate = RNA(n+1) + diphosphate. Functionally, DNA-dependent RNA polymerase (RNAP) catalyzes the transcription of DNA into RNA using the four ribonucleoside triphosphates as substrates. Forms part of the jaw domain. The polypeptide is DNA-directed RNA polymerase subunit Rpo1C (Thermococcus celer).